The chain runs to 490 residues: Cobyric acid synthase (490 aa).

A GATase cobBQ-type domain is found at 252–439 (RLKVVVPVLP…LHGLFESTAA (188 aa)). Residue Cys-333 is the Nucleophile of the active site. Residue His-431 is part of the active site.

Belongs to the CobB/CobQ family. CobQ subfamily.

It functions in the pathway cofactor biosynthesis; adenosylcobalamin biosynthesis. Its function is as follows. Catalyzes amidations at positions B, D, E, and G on adenosylcobyrinic A,C-diamide. NH(2) groups are provided by glutamine, and one molecule of ATP is hydrogenolyzed for each amidation. The sequence is that of Cobyric acid synthase from Pseudomonas aeruginosa (strain LESB58).